A 134-amino-acid chain; its full sequence is Ribonuclease VapC1 (134 aa).

The 130-residue stretch at 3-132 (YMLDTNIIIY…RITDLQWQDW (130 aa)) folds into the PINc domain. Mg(2+) is bound by residues Asp6 and Asp99.

This sequence belongs to the PINc/VapC protein family. In terms of assembly, forms a complex with VapB1. Mg(2+) is required as a cofactor.

Toxic component of a type II toxin-antitoxin (TA) system. Upon expression in E.coli inhibits growth in liquid culture. Its toxic effect is neutralized by coexpression with antitoxin VapB1. Degrades RNA but not ss- or ds-DNA in vitro, degradation is inhibited by VapB1 antitoxin. The polypeptide is Ribonuclease VapC1 (Haemophilus influenzae (strain R2866)).